The chain runs to 382 residues: Dual-specificity RNA methyltransferase RlmN (382 aa).

E94 (proton acceptor) is an active-site residue. The 237-residue stretch at 100–336 (EANRGTLCVS…NTITRKTRGD (237 aa)) folds into the Radical SAM core domain. A disulfide bond links C107 and C342. The [4Fe-4S] cluster site is built by C114, C118, and C121. S-adenosyl-L-methionine is bound by residues 168-169 (GE), S200, 222-224 (SLH), and N299. The active-site S-methylcysteine intermediate is the C342.

It belongs to the radical SAM superfamily. RlmN family. Requires [4Fe-4S] cluster as cofactor.

The protein localises to the cytoplasm. It catalyses the reaction adenosine(2503) in 23S rRNA + 2 reduced [2Fe-2S]-[ferredoxin] + 2 S-adenosyl-L-methionine = 2-methyladenosine(2503) in 23S rRNA + 5'-deoxyadenosine + L-methionine + 2 oxidized [2Fe-2S]-[ferredoxin] + S-adenosyl-L-homocysteine. It carries out the reaction adenosine(37) in tRNA + 2 reduced [2Fe-2S]-[ferredoxin] + 2 S-adenosyl-L-methionine = 2-methyladenosine(37) in tRNA + 5'-deoxyadenosine + L-methionine + 2 oxidized [2Fe-2S]-[ferredoxin] + S-adenosyl-L-homocysteine. In terms of biological role, specifically methylates position 2 of adenine 2503 in 23S rRNA and position 2 of adenine 37 in tRNAs. m2A2503 modification seems to play a crucial role in the proofreading step occurring at the peptidyl transferase center and thus would serve to optimize ribosomal fidelity. This chain is Dual-specificity RNA methyltransferase RlmN, found in Legionella pneumophila (strain Paris).